Reading from the N-terminus, the 147-residue chain is Ubiquitin-like-conjugating enzyme ATG10 (147 aa).

The Glycyl thioester intermediate role is filled by Cys116.

The protein belongs to the ATG10 family. Forms homooligomers. Interacts with ATG10. Interacts with ATG7 and ATG12.

It is found in the preautophagosomal structure membrane. In terms of biological role, E2-like enzyme required for the cytoplasm to vacuole transport (Cvt), autophagy and nucleophagy. Acts as an E2-like enzyme that catalyzes the conjugation of ATG12 to ATG5. ATG12 conjugation to ATG5 is required for proper localization of ATG8 to the preautophagosomal structure (PAS). Likely serves as an ATG5-recognition molecule. This chain is Ubiquitin-like-conjugating enzyme ATG10, found in Kluyveromyces marxianus (strain DMKU3-1042 / BCC 29191 / NBRC 104275) (Yeast).